We begin with the raw amino-acid sequence, 601 residues long: Protein CT_858 (601 aa).

It belongs to the chlamydial CPn_1016/CT_858/TC_0248 family.

The sequence is that of Protein CT_858 from Chlamydia trachomatis serovar D (strain ATCC VR-885 / DSM 19411 / UW-3/Cx).